Consider the following 125-residue polypeptide: NADPH-dependent 7-cyano-7-deazaguanine reductase (125 aa).

Catalysis depends on Cys-40, which acts as the Thioimide intermediate. Asp-47 functions as the Proton donor in the catalytic mechanism. Substrate-binding positions include 62-64 (LET) and 81-82 (HE).

This sequence belongs to the GTP cyclohydrolase I family. QueF type 1 subfamily.

It is found in the cytoplasm. It carries out the reaction 7-aminomethyl-7-carbaguanine + 2 NADP(+) = 7-cyano-7-deazaguanine + 2 NADPH + 3 H(+). The protein operates within tRNA modification; tRNA-queuosine biosynthesis. Its function is as follows. Catalyzes the NADPH-dependent reduction of 7-cyano-7-deazaguanine (preQ0) to 7-aminomethyl-7-deazaguanine (preQ1). This Frankia casuarinae (strain DSM 45818 / CECT 9043 / HFP020203 / CcI3) protein is NADPH-dependent 7-cyano-7-deazaguanine reductase.